Here is a 304-residue protein sequence, read N- to C-terminus: Sulfate adenylyltransferase subunit 2 (304 aa).

It belongs to the PAPS reductase family. CysD subfamily. In terms of assembly, heterodimer composed of CysD, the smaller subunit, and CysNC.

It catalyses the reaction sulfate + ATP + H(+) = adenosine 5'-phosphosulfate + diphosphate. Its pathway is sulfur metabolism; hydrogen sulfide biosynthesis; sulfite from sulfate: step 1/3. Functionally, with CysN forms the ATP sulfurylase (ATPS) that catalyzes the adenylation of sulfate producing adenosine 5'-phosphosulfate (APS) and diphosphate, the first enzymatic step in sulfur assimilation pathway. APS synthesis involves the formation of a high-energy phosphoric-sulfuric acid anhydride bond driven by GTP hydrolysis by CysN coupled to ATP hydrolysis by CysD. In Xylella fastidiosa (strain 9a5c), this protein is Sulfate adenylyltransferase subunit 2.